A 30-amino-acid polypeptide reads, in one-letter code: Mejucin (30 aa).

The protein resides in the secreted. In terms of biological role, bacteriocin that inhibits the growth of several Gram-positive bacteria, especially the food-borne pathogens L.monocytogenes, B.cereus strain ATCC 11778, B.cereus strain ATCC 21366, B.cereus strain ATCC 10876 and B.cereus strain ATCC 14579. Likely to act by disrupting the pathogen membrane resulting in leakage of intracellular constituents. Does not inhibit the growth of Gram-negative bacteria. This Bacillus subtilis protein is Mejucin.